Consider the following 189-residue polypeptide: Crossover junction endodeoxyribonuclease RuvC (189 aa).

Catalysis depends on residues Asp12, Glu72, and Asp147. Asp12, Glu72, and Asp147 together coordinate Mg(2+).

This sequence belongs to the RuvC family. In terms of assembly, homodimer which binds Holliday junction (HJ) DNA. The HJ becomes 2-fold symmetrical on binding to RuvC with unstacked arms; it has a different conformation from HJ DNA in complex with RuvA. In the full resolvosome a probable DNA-RuvA(4)-RuvB(12)-RuvC(2) complex forms which resolves the HJ. Requires Mg(2+) as cofactor.

The protein resides in the cytoplasm. It carries out the reaction Endonucleolytic cleavage at a junction such as a reciprocal single-stranded crossover between two homologous DNA duplexes (Holliday junction).. Its function is as follows. The RuvA-RuvB-RuvC complex processes Holliday junction (HJ) DNA during genetic recombination and DNA repair. Endonuclease that resolves HJ intermediates. Cleaves cruciform DNA by making single-stranded nicks across the HJ at symmetrical positions within the homologous arms, yielding a 5'-phosphate and a 3'-hydroxyl group; requires a central core of homology in the junction. The consensus cleavage sequence is 5'-(A/T)TT(C/G)-3'. Cleavage occurs on the 3'-side of the TT dinucleotide at the point of strand exchange. HJ branch migration catalyzed by RuvA-RuvB allows RuvC to scan DNA until it finds its consensus sequence, where it cleaves and resolves the cruciform DNA. In Porphyromonas gingivalis (strain ATCC BAA-308 / W83), this protein is Crossover junction endodeoxyribonuclease RuvC.